The chain runs to 126 residues: Fatty acid-binding protein, liver (126 aa).

Ala-2 bears the N-acetylalanine mark.

It belongs to the calycin superfamily. Fatty-acid binding protein (FABP) family. As to expression, liver.

It localises to the cytoplasm. In terms of biological role, binds free fatty acids and their coenzyme A derivatives, bilirubin, and some other small molecules in the cytoplasm. May be involved in intracellular lipid transport this L-FABP binds only one fatty acid/molecule. Has more affinity for trans-parinaric acid than for cis-parinaric acid. In Rhamdia sapo (South American catfish), this protein is Fatty acid-binding protein, liver (fabp1).